The chain runs to 264 residues: Dehydrodolichyl diphosphate synthase complex subunit SPAC4D7.04c (264 aa).

Belongs to the UPP synthase family. As to quaternary structure, forms an active dehydrodolichyl diphosphate synthase complex with nus1. Requires Mg(2+) as cofactor.

The protein resides in the endoplasmic reticulum membrane. It catalyses the reaction n isopentenyl diphosphate + (2E,6E)-farnesyl diphosphate = a di-trans,poly-cis-polyprenyl diphosphate + n diphosphate. The protein operates within protein modification; protein glycosylation. With nus1, forms the dehydrodolichyl diphosphate synthase (DDS) complex, an essential component of the dolichol monophosphate (Dol-P) biosynthetic machinery. Adds multiple copies of isopentenyl pyrophosphate (IPP) to farnesyl pyrophosphate (FPP) to produce dehydrodolichyl diphosphate (Dedol-PP), a precursor of dolichol which is utilized as a sugar carrier in protein glycosylation in the endoplasmic reticulum (ER). In Schizosaccharomyces pombe (strain 972 / ATCC 24843) (Fission yeast), this protein is Dehydrodolichyl diphosphate synthase complex subunit SPAC4D7.04c.